We begin with the raw amino-acid sequence, 159 residues long: ATP synthase subunit b (159 aa).

A helical membrane pass occupies residues 4-24; it reads VGINGTLIVQLVTFVILVALL.

Belongs to the ATPase B chain family. F-type ATPases have 2 components, F(1) - the catalytic core - and F(0) - the membrane proton channel. F(1) has five subunits: alpha(3), beta(3), gamma(1), delta(1), epsilon(1). F(0) has three main subunits: a(1), b(2) and c(10-14). The alpha and beta chains form an alternating ring which encloses part of the gamma chain. F(1) is attached to F(0) by a central stalk formed by the gamma and epsilon chains, while a peripheral stalk is formed by the delta and b chains.

It is found in the cell inner membrane. Its function is as follows. F(1)F(0) ATP synthase produces ATP from ADP in the presence of a proton or sodium gradient. F-type ATPases consist of two structural domains, F(1) containing the extramembraneous catalytic core and F(0) containing the membrane proton channel, linked together by a central stalk and a peripheral stalk. During catalysis, ATP synthesis in the catalytic domain of F(1) is coupled via a rotary mechanism of the central stalk subunits to proton translocation. In terms of biological role, component of the F(0) channel, it forms part of the peripheral stalk, linking F(1) to F(0). In Acidithiobacillus ferrooxidans (strain ATCC 23270 / DSM 14882 / CIP 104768 / NCIMB 8455) (Ferrobacillus ferrooxidans (strain ATCC 23270)), this protein is ATP synthase subunit b.